A 173-amino-acid polypeptide reads, in one-letter code: MTIAKDSMVNDGIRAREVRLIASDGEQLGVKSRQEAMQIAEDASLDLVLVAPKAKPPVARIMDYGKYRFEQQKKDREARKKQKVVSIKEVRLSPAIDTNDFNTKLKHAEKFLSKGDKVRVSIRFKGRAITHKDIGRQVLNRMIEATKEFSTVEAYPKMDGRSMFLVLAPKTDK.

Belongs to the IF-3 family. In terms of assembly, monomer.

The protein resides in the cytoplasm. IF-3 binds to the 30S ribosomal subunit and shifts the equilibrium between 70S ribosomes and their 50S and 30S subunits in favor of the free subunits, thus enhancing the availability of 30S subunits on which protein synthesis initiation begins. The polypeptide is Translation initiation factor IF-3 (Lactiplantibacillus plantarum (strain ATCC BAA-793 / NCIMB 8826 / WCFS1) (Lactobacillus plantarum)).